Here is a 470-residue protein sequence, read N- to C-terminus: Ribulose bisphosphate carboxylase large chain (470 aa).

An N6,N6,N6-trimethyllysine modification is found at Lys5. Residues Asn114 and Thr164 each coordinate substrate. Lys166 acts as the Proton acceptor in catalysis. Lys168 lines the substrate pocket. Lys192, Asp194, and Glu195 together coordinate Mg(2+). Residue Lys192 is modified to N6-carboxylysine. The active-site Proton acceptor is His285. Substrate contacts are provided by Arg286, His318, and Ser370.

It belongs to the RuBisCO large chain family. Type I subfamily. As to quaternary structure, heterohexadecamer of 8 large chains and 8 small chains; disulfide-linked. The disulfide link is formed within the large subunit homodimers. It depends on Mg(2+) as a cofactor. Post-translationally, the disulfide bond which can form in the large chain dimeric partners within the hexadecamer appears to be associated with oxidative stress and protein turnover.

It is found in the plastid. The protein localises to the chloroplast. It catalyses the reaction 2 (2R)-3-phosphoglycerate + 2 H(+) = D-ribulose 1,5-bisphosphate + CO2 + H2O. The enzyme catalyses D-ribulose 1,5-bisphosphate + O2 = 2-phosphoglycolate + (2R)-3-phosphoglycerate + 2 H(+). In terms of biological role, ruBisCO catalyzes two reactions: the carboxylation of D-ribulose 1,5-bisphosphate, the primary event in carbon dioxide fixation, as well as the oxidative fragmentation of the pentose substrate in the photorespiration process. Both reactions occur simultaneously and in competition at the same active site. In Kigelia africana (Sausage tree), this protein is Ribulose bisphosphate carboxylase large chain.